The sequence spans 446 residues: MKEIEKLKEEYPLLNKLIEIEEVFWVNPNMEKYETAIKDSPLSEENVKDAEERLKRFASYIAKVFPETKDTGGIIESPLVKIPSMKQSLEKNYEQPILGELLLKCDSHLPISGSIKARGGIYEVLKHAEQLALQQGMLTEEDDYSILDSDTCREFFATYSIAVGSTGNLGLSIGIMSAKLGFNVTVHMSADAKQWKKDLLRSKGVNVIEYEADYSKAVEEGRRQADADPSCYFVDDENSHDLFLGYAVAASRLQKQLEELEIIVDEEHPLFVYLPCGVGGGPGGVAFGLKLLYKDNVHCFFAEPTHSPCMLIGLMTGLHDKIAVQDIGIDNVTDADGLAVGRPSGFVGKTMEPFLSGNYTVSDEELYRLLKELADTENIYLEPSALAGMIGPVKVCKEDAYLQEQQLMEKMKKGTHIVWGTGGSMVPEDVMNGYYKTGEALTILEK.

At Lys116 the chain carries N6-(pyridoxal phosphate)lysine.

It belongs to the serine/threonine dehydratase family. DsdA subfamily. Pyridoxal 5'-phosphate serves as cofactor.

The enzyme catalyses D-serine = pyruvate + NH4(+). In Bacillus anthracis (strain CDC 684 / NRRL 3495), this protein is Probable D-serine dehydratase.